The following is a 252-amino-acid chain: Nicotinamide/nicotinic acid mononucleotide adenylyltransferase 3 (252 aa).

Ser-14 and Phe-15 together coordinate NAD(+). Positions 22 and 56 each coordinate ATP. Trp-90, Thr-93, Gly-135, and Asp-137 together coordinate NAD(+). Residue Lys-140 coordinates ATP. NAD(+) is bound by residues Leu-147, Trp-148, Arg-167, and Asn-198. 203-206 (TYIR) is a binding site for ATP.

The protein belongs to the eukaryotic NMN adenylyltransferase family. As to quaternary structure, homotetramer. The cofactor is Mg(2+). In terms of tissue distribution, expressed in lung and spleen with lower levels in placenta and kidney.

The protein resides in the mitochondrion. It catalyses the reaction beta-nicotinamide D-ribonucleotide + ATP + H(+) = diphosphate + NAD(+). It carries out the reaction nicotinate beta-D-ribonucleotide + ATP + H(+) = deamido-NAD(+) + diphosphate. It participates in cofactor biosynthesis; NAD(+) biosynthesis; NAD(+) from nicotinamide D-ribonucleotide: step 1/1. Its pathway is cofactor biosynthesis; NAD(+) biosynthesis; deamido-NAD(+) from nicotinate D-ribonucleotide: step 1/1. Its activity is regulated as follows. Activity is strongly inhibited by galotannin. Inhibited by P1-(adenosine-5')-P4-(nicotinic-acid-riboside-5')-tetraphosphate (Nap4AD). Its function is as follows. Catalyzes the formation of NAD(+) from nicotinamide mononucleotide (NMN) and ATP. Can also use the deamidated form; nicotinic acid mononucleotide (NaMN) as substrate with the same efficiency. Can use triazofurin monophosphate (TrMP) as substrate. Can also use GTP and ITP as nucleotide donors. Also catalyzes the reverse reaction, i.e. the pyrophosphorolytic cleavage of NAD(+). For the pyrophosphorolytic activity, can use NAD(+), NADH, NaAD, nicotinic acid adenine dinucleotide phosphate (NHD), nicotinamide guanine dinucleotide (NGD) as substrates. Fails to cleave phosphorylated dinucleotides NADP(+), NADPH and NaADP(+). Protects against axonal degeneration following injury. May be involved in the maintenance of axonal integrity. Also functions as a stress-response chaperone protein that prevents toxic aggregation of proteins; this function may be independent of its NAD(+) synthesis activity. This chain is Nicotinamide/nicotinic acid mononucleotide adenylyltransferase 3, found in Homo sapiens (Human).